A 286-amino-acid chain; its full sequence is Carbohydrate-binding domain-containing protein Cthe_2159 (286 aa).

The N-terminal stretch at 1 to 20 is a signal peptide; that stretch reads MSIKKLILAASILTTLALTG. A lipid anchor (N-palmitoyl cysteine) is attached at cysteine 21. Cysteine 21 carries S-diacylglycerol cysteine lipidation. Residues 124-225 form a polygalacturonic acid-binding region; the sequence is GKDNVLTDAE…GIKVENTEEP (102 aa). Residues arginine 152, aspartate 153, aspartate 154, asparagine 177, aspartate 178, aspartate 215, aspartate 243, aspartate 244, and aspartate 247 each contribute to the Ca(2+) site.

In terms of assembly, monomer.

The protein resides in the cell membrane. In terms of biological role, binds cellulosic and pectic substrates. Displays no enzyme activity (in vitro). This Acetivibrio thermocellus (strain ATCC 27405 / DSM 1237 / JCM 9322 / NBRC 103400 / NCIMB 10682 / NRRL B-4536 / VPI 7372) (Clostridium thermocellum) protein is Carbohydrate-binding domain-containing protein Cthe_2159.